Reading from the N-terminus, the 2962-residue chain is Sex determination and dosage compensation protein sdc-2 (2962 aa).

Disordered regions lie at residues 1–28 (MSDESELGNQSEMESFNESDSPDEADPD) and 1061–1110 (DKRS…QVDP). The segment covering 15-27 (SFNESDSPDEADP) has biased composition (acidic residues). Coiled coils occupy residues 995 to 1085 (LESA…LADK) and 1140 to 1268 (REER…KRVS). Disordered stretches follow at residues 1535 to 1554 (PASLNSEDSDSEDSREGSPV) and 2198 to 2227 (LDSSGSGRSTRCEIFEDSPSEDENDENQLD). Residues 2212-2225 (FEDSPSEDENDENQ) show a composition bias toward acidic residues.

In terms of assembly, component of the SDC complex, which consists of sdc-1, sdc-2 and sdc-3. Within the complex, interacts with sdc-1 and sdc-3. In terms of tissue distribution, expressed in hermaphrodites (XX), but absent in males (XO) (at protein level).

The protein localises to the chromosome. In terms of biological role, component of the SDC complex that functions in sex determination and in X chromosome dosage compensation specifically in hermaphrodite (XX) animals. Required for the recruitment of the condensin I-like dosage compensation complex to the male sex-determining autosomal gene her-1, thereby contributing to its repression and initiating hermaphrodite sexual development. Plays a central role in X-chromosome recognition and in the recruitment and assembly of the dosage compensation complex and the dosage compensation protein dpy-21 onto the X chromosomes in hermaphrodites, which leads to a reduction of X-linked gene transcription and an equalization of X-linked gene expression between the sexes. May confer protection against toxicity induced by heavy metals such as arsenite. The protein is Sex determination and dosage compensation protein sdc-2 of Caenorhabditis elegans.